A 1953-amino-acid polypeptide reads, in one-letter code: Protein BNI1 (1953 aa).

Disordered stretches follow at residues 1–152, 230–258, 263–282, and 287–306; these read MLKN…ASSL, MRANTTSSSTASRTSMASDHHPILTANSS, KSVLMTSASSPTSTVYSNSL, and TLSSVGTSTSKGKKLVSGSL. Over residues 31–40 the composition is skewed to low complexity; the sequence is ANSNATNSNT. Composition is skewed to polar residues over residues 41–100 and 110–143; these read GSPT…SQYM and VSSQHARSHSMQSKYSYSKRNSSQASNKLTRQHT. The GBD/FH3 domain occupies 174-696; it reads EMPSDPYEVE…NVSVASTSDE (523 aa). Positions 232–246 are enriched in low complexity; that stretch reads ANTTSSSTASRTSMA. The span at 263–278 shows a compositional bias: polar residues; sequence KSVLMTSASSPTSTVY. 2 positions are modified to phosphoserine: Ser311 and Ser325. The disordered stretch occupies residues 312-337; that stretch reads LNNIYRGGAENNTSASTLPGDRTNRP. Coiled coils occupy residues 712–807, 864–894, and 928–981; these read QTDE…TILN, NKRLKMLRMQMENIENEARQLEMTNFAEFEK, and NKLN…YKGF. Disordered regions lie at residues 990-1014, 1040-1094, and 1149-1330; these read IMDSPKKNTGDVETEEDANYASLDP, HEIQ…LDAL, and TQKV…MPAS. Residues 1053–1337 form the FH1 domain; it reads SSSSSDDESE…PASQIKSAVT (285 aa). Ser1085 and Ser1170 each carry phosphoserine. Residues 1184-1211 are compositionally biased toward basic and acidic residues; it reads DKAEKDMRQHVENGKQGRVVNHEEDKTA. Residues 1217–1237 show a composition bias toward polar residues; the sequence is SKLNNTDGAEDLSTQSSVLSS. Positions 1238–1250 are enriched in pro residues; it reads QPPPPPPPPPPVP. Positions 1257 to 1270 are enriched in basic and acidic residues; it reads SLEKEKKSEDDTVK. Positions 1278-1292 are enriched in pro residues; sequence PAPPPPPPPPPPPPM. A phosphoserine mark is found at Ser1338 and Ser1344. One can recognise an FH2 domain in the interval 1348-1766; that stretch reads FEKYPRPHKK…YIKHKKIVEE (419 aa). A coiled-coil region spans residues 1732-1811; the sequence is KFADFINEYK…DKLLEQLKNA (80 aa). Over residues 1768-1779 the composition is skewed to basic and acidic residues; the sequence is QKRAQEKEKQKE. 3 disordered regions span residues 1768-1797, 1809-1844, and 1872-1899; these read QKRAQEKEKQKENSNSPSSEGNEEDEAEDR, KNAGPAKSDPSSARKRALVRKKYLSEKDNAPQLLND, and PTPLATRGVMNTSEDLPSPSKTSALEDQ. The 35-residue stretch at 1792–1826 folds into the DAD domain; sequence DEAEDRRAVMDKLLEQLKNAGPAKSDPSSARKRAL. Residues 1821-1830 show a composition bias toward basic residues; it reads ARKRALVRKK. A compositionally biased stretch (polar residues) spans 1880–1896; sequence VMNTSEDLPSPSKTSAL. Thr1918 is modified (phosphothreonine).

It belongs to the formin homology family. BNI1 subfamily. As to quaternary structure, homodimer, and possibly also homotetramer. Interacts with PFY1 via the FH1 domain and with actin via the FH2 domain.

It is found in the cell membrane. The protein resides in the cell projection. It localises to the ruffle membrane. The protein localises to the cytoplasm. Its subcellular location is the cytoskeleton. In terms of biological role, required for the assembly of F-actin structures, such as actin cables and stress fibers. Nucleates actin filaments. Binds to the barbed end of the actin filament and acts as a leaky capper, slowing both polymerization and depolymerization. Protects the growing actin fiber from tight capping proteins and so increases the time of elongation and the total amount of F-actin. May organize microtubules by mediating spindle positioning and movement in the budding process. Potential target of the RHO family members. The chain is Protein BNI1 (BNI1) from Saccharomyces cerevisiae (strain ATCC 204508 / S288c) (Baker's yeast).